The primary structure comprises 95 residues: Aspartyl/glutamyl-tRNA(Asn/Gln) amidotransferase subunit C (95 aa).

The protein belongs to the GatC family. In terms of assembly, heterotrimer of A, B and C subunits.

The enzyme catalyses L-glutamyl-tRNA(Gln) + L-glutamine + ATP + H2O = L-glutaminyl-tRNA(Gln) + L-glutamate + ADP + phosphate + H(+). It carries out the reaction L-aspartyl-tRNA(Asn) + L-glutamine + ATP + H2O = L-asparaginyl-tRNA(Asn) + L-glutamate + ADP + phosphate + 2 H(+). Its function is as follows. Allows the formation of correctly charged Asn-tRNA(Asn) or Gln-tRNA(Gln) through the transamidation of misacylated Asp-tRNA(Asn) or Glu-tRNA(Gln) in organisms which lack either or both of asparaginyl-tRNA or glutaminyl-tRNA synthetases. The reaction takes place in the presence of glutamine and ATP through an activated phospho-Asp-tRNA(Asn) or phospho-Glu-tRNA(Gln). In Nitrobacter winogradskyi (strain ATCC 25391 / DSM 10237 / CIP 104748 / NCIMB 11846 / Nb-255), this protein is Aspartyl/glutamyl-tRNA(Asn/Gln) amidotransferase subunit C.